Reading from the N-terminus, the 249-residue chain is Inhibitor of growth protein 4 (249 aa).

Residues 25–118 (FQLMRDLDQR…ADLKEKQIES (94 aa)) are a coiled coil. Residues 115–160 (QIESSDYDSSSSKGKKKGRAQKEKKAARARSKGKNSDEEAPKTAQK) are disordered. The PHD-type zinc finger occupies 196–245 (PTYCLCHQVSYGEMIGCDNPDCSIEWFHFACVGLTTKPRGKWFCPRCSQE). Zn(2+) is bound by residues C199, C201, C212, C217, H223, C226, C239, and C242.

It belongs to the ING family. As to quaternary structure, homodimer. Component of the HBO1 complex.

It is found in the nucleus. In terms of biological role, component of HBO1 complexes, which specifically mediate acetylation of histone H3 at 'Lys-14' (H3K14ac), and have reduced activity toward histone H4. Through chromatin acetylation it may function in DNA replication. The chain is Inhibitor of growth protein 4 (ING4) from Gallus gallus (Chicken).